We begin with the raw amino-acid sequence, 4306 residues long: Cytoplasmic dynein 2 heavy chain 1 (4306 aa).

The segment at 1-1650 is stem; the sequence is MAGSLGDVRK…YVQMVDSELQ (1650 aa). Position 145-152 (145-152) interacts with ATP; sequence LGIVLRKS. Residues 669–696 are a coiled coil; that stretch reads KELEGYIQKLQNAAERLATENRRLRKWH. 4 AAA regions span residues 1651–1875, 1941–2161, 2249–2505, and 2617–2862; these read YTYE…VLRG, SALK…KQND, LTAD…WVLG, and HYGR…ESCK. Residues 1689 to 1696, 1979 to 1986, 2291 to 2298, and 2655 to 2662 each bind ATP; these read GPAGTGKT, GPSGAGKS, GPEGCGKG, and GRSGVGRR. Positions 2880-3168 are stalk; sequence AISSSKKKEL…AEVSKAQETI (289 aa). 3 coiled-coil regions span residues 2896-2981, 3108-3199, and 3407-3441; these read LQAG…KEVQ, LETE…LATL, and IQHE…SLLE. AAA stretches follow at residues 3243-3472 and 3689-3904; these read LCTE…LIQD and MALF…VIDR.

Belongs to the dynein heavy chain family. As to quaternary structure, the cytoplasmic dynein complex 2 is probably composed by a heavy chain DYNC2H1 homodimer and a number of DYNC2LI1 light intermediate chains. Detected in brain, lung, spleen and kidney (at protein level). Enriched in the ependymal layer lining the lateral ventricles (at protein level).

It localises to the cytoplasm. Its subcellular location is the cytoskeleton. The protein resides in the cilium axoneme. It is found in the cell membrane. In terms of biological role, may function as a motor for intraflagellar retrograde transport. Functions in cilia biogenesis. According to PubMed:8666668, it may play a role in transport between endoplasmic reticulum and Golgi or organization of the Golgi in cells. This is Cytoplasmic dynein 2 heavy chain 1 (Dync2h1) from Mus musculus (Mouse).